A 623-amino-acid polypeptide reads, in one-letter code: NADPH-dependent diflavin oxidoreductase 1 (623 aa).

Residues 7–168 enclose the Flavodoxin-like domain; the sequence is IVILYGSETG…VYFEYEKKVL (162 aa). FMN contacts are provided by residues 13–18, 60–63, 106–115, and Asp-142; these read SETGNA, STTG, and LGDSSYPKFN. Residues 224–491 form the FAD-binding FR-type domain; that stretch reads ESLKVGRVNI…VGPGVGLAPL (268 aa). FAD is bound by residues Arg-383, 413–416, and 445–448; these read RYYS and GICT. 538–539 serves as a coordination point for NADP(+); the sequence is SR. Trp-623 provides a ligand contact to FAD.

The protein belongs to the NADPH-dependent diflavin oxidoreductase NDOR1 family. This sequence in the N-terminal section; belongs to the flavodoxin family. It in the C-terminal section; belongs to the flavoprotein pyridine nucleotide cytochrome reductase family. In terms of assembly, interacts with DRE2; as part of the cytosolic iron-sulfur (Fe-S) protein assembly (CIA) machinery. Requires FAD as cofactor. FMN serves as cofactor.

It localises to the cytoplasm. Its subcellular location is the mitochondrion. The enzyme catalyses 2 oxidized [2Fe-2S]-[protein] + NADPH = 2 reduced [2Fe-2S]-[protein] + NADP(+) + H(+). NADPH-dependent reductase which is a central component of the cytosolic iron-sulfur (Fe-S) protein assembly (CIA) machinery. Transfers electrons from NADPH via its FAD and FMN prosthetic groups to the [2Fe-2S] cluster of DRE2, another key component of the CIA machinery. In turn, this reduced cluster provides electrons for assembly of cytosolic iron-sulfur cluster proteins. Positively controls H(2)O(2)-induced cell death. This Saccharomyces cerevisiae (strain ATCC 204508 / S288c) (Baker's yeast) protein is NADPH-dependent diflavin oxidoreductase 1.